The primary structure comprises 346 residues: MQVYYDRDADQDLIKGKKVAVVGYGSQGHAHAQNMRDSGVKEVAIALRPGSPTAKKAEAAGFKVMSNKEAAAWADVIMIAAPDEHQAKIYAEDIGPNMKPGAALAFAHGLNIHFGLIEARPDIDVFMVAPKGPGHTVRSEYQKGGGVPCLIAVAQEAQGSAAAGNGYAKALALSYASAVGGGRSGIIETTFKEECETDLFGEQAVLCGGITHLIQAGFETLVEAGYAPEMAYFECLHETKLIVDLLYEGGIANMRYSISNTAEYGDIKTGPRIITEETKKEMKRVLADIQSGRFVKDFVLDNQAGQPELKASRKAAAAHPIEQTGEKLRAMMPWIAKNKLVDKAKN.

A KARI N-terminal Rossmann domain is found at 1–189 (MQVYYDRDAD…GGGRSGIIET (189 aa)). NADP(+)-binding positions include 24–27 (YGSQ), Arg48, Ser51, Thr53, and 83–86 (DEHQ). Residue His108 is part of the active site. Gly134 is an NADP(+) binding site. In terms of domain architecture, KARI C-terminal knotted spans 190-335 (TFKEECETDL…EKLRAMMPWI (146 aa)). Residues Asp198, Glu202, Glu234, and Glu238 each contribute to the Mg(2+) site. Ser259 lines the substrate pocket.

This sequence belongs to the ketol-acid reductoisomerase family. Requires Mg(2+) as cofactor.

It carries out the reaction (2R)-2,3-dihydroxy-3-methylbutanoate + NADP(+) = (2S)-2-acetolactate + NADPH + H(+). It catalyses the reaction (2R,3R)-2,3-dihydroxy-3-methylpentanoate + NADP(+) = (S)-2-ethyl-2-hydroxy-3-oxobutanoate + NADPH + H(+). The protein operates within amino-acid biosynthesis; L-isoleucine biosynthesis; L-isoleucine from 2-oxobutanoate: step 2/4. Its pathway is amino-acid biosynthesis; L-valine biosynthesis; L-valine from pyruvate: step 2/4. Functionally, involved in the biosynthesis of branched-chain amino acids (BCAA). Catalyzes an alkyl-migration followed by a ketol-acid reduction of (S)-2-acetolactate (S2AL) to yield (R)-2,3-dihydroxy-isovalerate. In the isomerase reaction, S2AL is rearranged via a Mg-dependent methyl migration to produce 3-hydroxy-3-methyl-2-ketobutyrate (HMKB). In the reductase reaction, this 2-ketoacid undergoes a metal-dependent reduction by NADPH to yield (R)-2,3-dihydroxy-isovalerate. The polypeptide is Ketol-acid reductoisomerase (NADP(+)) (Sphingopyxis alaskensis (strain DSM 13593 / LMG 18877 / RB2256) (Sphingomonas alaskensis)).